The following is a 317-amino-acid chain: Brain-specific serine protease 4 (317 aa).

An N-terminal signal peptide occupies residues 1 to 32; sequence MVVSGAPPALGGGCLGTFTSLLLLASTAILNA. Positions 50–290 constitute a Peptidase S1 domain; sequence VVGGEDSTDS…HRSWVEKIVQ (241 aa). N-linked (GlcNAc...) asparagine glycosylation occurs at asparagine 70. Cysteine 75 and cysteine 91 form a disulfide bridge. Catalysis depends on charge relay system residues histidine 90 and aspartate 141. 3 disulfide bridges follow: cysteine 175-cysteine 248, cysteine 208-cysteine 227, and cysteine 238-cysteine 266. Serine 242 functions as the Charge relay system in the catalytic mechanism.

Belongs to the peptidase S1 family. As to expression, expressed abundantly in the epithelial cells of the airways, including trachea, esophagus and fetal lung. Scarce in adult lung. Expressed at low levels in placenta, pancreas, prostate and thyroid gland.

Its subcellular location is the secreted. In terms of biological role, preferentially cleaves the synthetic substrate H-D-Leu-Thr-Arg-pNA compared to tosyl-Gly-Pro-Arg-pNA. In Homo sapiens (Human), this protein is Brain-specific serine protease 4 (PRSS22).